Reading from the N-terminus, the 458-residue chain is UDP-N-acetylmuramate--L-alanine ligase (458 aa).

112–118 (GMHGKTT) contacts ATP.

This sequence belongs to the MurCDEF family.

It localises to the cytoplasm. The enzyme catalyses UDP-N-acetyl-alpha-D-muramate + L-alanine + ATP = UDP-N-acetyl-alpha-D-muramoyl-L-alanine + ADP + phosphate + H(+). The protein operates within cell wall biogenesis; peptidoglycan biosynthesis. Functionally, cell wall formation. This Acidobacterium capsulatum (strain ATCC 51196 / DSM 11244 / BCRC 80197 / JCM 7670 / NBRC 15755 / NCIMB 13165 / 161) protein is UDP-N-acetylmuramate--L-alanine ligase.